The chain runs to 145 residues: Small ribosomal subunit protein uS19 (145 aa).

Ala-2 carries the post-translational modification N-acetylalanine. Lys-108 is covalently cross-linked (Glycyl lysine isopeptide (Lys-Gly) (interchain with G-Cter in SUMO2)).

Belongs to the universal ribosomal protein uS19 family. As to quaternary structure, component of the small ribosomal subunit.

It localises to the cytoplasm. In terms of biological role, component of the small ribosomal subunit. The ribosome is a large ribonucleoprotein complex responsible for the synthesis of proteins in the cell. This is Small ribosomal subunit protein uS19 (RPS15) from Bos taurus (Bovine).